The primary structure comprises 1529 residues: ATP-dependent permease PDR15 (1529 aa).

Positions 1-13 (MSSDIRDVEERNS) are enriched in basic and acidic residues. A disordered region spans residues 1 to 38 (MSSDIRDVEERNSRSSSSSSSSNSAAQSIGQHPYRGFD). At 1–531 (MSSDIRDVEE…NFWRMKQSAS (531 aa)) the chain is on the cytoplasmic side. Positions 14–24 (RSSSSSSSSNS) are enriched in low complexity. The ABC transporter 1 domain maps to 171–420 (LRLLKPSKEE…FQDMGYYCPP (250 aa)). Residues 532–552 (VTLWQVIGNSVMAFILGSMFY) traverse the membrane as a helical segment. Topologically, residues 553 to 567 (KVMKKNDTSTFYFRG) are extracellular. The N-linked (GlcNAc...) asparagine glycan is linked to N558. A helical transmembrane segment spans residues 568–588 (AAMFFAILFNAFSCLLEIFSL). At 589–617 (YETRPITEKHRTYSLYHPSADAFASVLSE) the chain is on the cytoplasmic side. A helical transmembrane segment spans residues 618–638 (MPPKLITAVCFNIIFYFLVDF). The Extracellular segment spans residues 639–642 (RRNG). Residues 643–663 (GVFFFYFLINVIATFTLSHLF) traverse the membrane as a helical segment. Residues 664 to 699 (RCVGSLTKTLQEAMVPASMLLLAISMYTGFAIPKTK) are Cytoplasmic-facing. Residues 700–720 (ILGWSIWIWYINPLAYLFESL) traverse the membrane as a helical segment. At 721-783 (MINEFHDRRF…YDYEHKHKWR (63 aa)) the chain is on the extracellular side. N744 carries N-linked (GlcNAc...) asparagine glycosylation. Residues 784–804 (GFGIGMAYVVFFFFVYLILCE) form a helical membrane-spanning segment. The Cytoplasmic segment spans residues 805-1219 (YNEGAKQKGE…LFQQYWRSPD (415 aa)). Over residues 829-840 (EGKLQEKHRPGD) the composition is skewed to basic and acidic residues. Residues 829–873 (EGKLQEKHRPGDIENNAGSSPDSATTEKKILDDSSEGSDSSSDNA) are disordered. The ABC transporter 2 domain maps to 884–1127 (FHWRDLCYDV…MIDYFESKGA (244 aa)). An ATP-binding site is contributed by 920–927 (GASGAGKT). A helical membrane pass occupies residues 1220-1240 (YLWSKFILTIFNQVFIGFTFF). At 1241 to 1312 (KADRSLQGLQ…VEIPWNILAG (72 aa)) the chain is on the extracellular side. A helical transmembrane segment spans residues 1313 to 1333 (TIAYCIYYYAVGFYANASAAG). The Cytoplasmic portion of the chain corresponds to 1334 to 1340 (QLHERGA). The chain crosses the membrane as a helical span at residues 1341–1361 (LFWLFSIAFYVYIGSMGLLMI). The Extracellular portion of the chain corresponds to 1362–1368 (SFNEVAE). A helical transmembrane segment spans residues 1369–1389 (TAAHMGTLLFTMALSFCGVMA). Over 1390 to 1396 (TPKVMPR) the chain is Cytoplasmic. A helical transmembrane segment spans residues 1397–1417 (FWIFMYRVSPLTYMIDALLAL). The Extracellular segment spans residues 1418–1492 (GVANVDVKCS…SSHYYRRWRN (75 aa)). Residues 1493-1513 (YGIFICYIAFDYIAATFLYWL) traverse the membrane as a helical segment. Residues 1514–1529 (SRVPKKNGKISEKPKK) lie on the Cytoplasmic side of the membrane.

It belongs to the ABC transporter superfamily. ABCG family. PDR (TC 3.A.1.205) subfamily.

Its subcellular location is the membrane. This chain is ATP-dependent permease PDR15 (PDR15), found in Saccharomyces cerevisiae (strain ATCC 204508 / S288c) (Baker's yeast).